A 280-amino-acid chain; its full sequence is Bifunctional protein FolD (280 aa).

NADP(+)-binding positions include 165–167, Ser-190, and Ile-231; that span reads GRS.

It belongs to the tetrahydrofolate dehydrogenase/cyclohydrolase family. Homodimer.

The catalysed reaction is (6R)-5,10-methylene-5,6,7,8-tetrahydrofolate + NADP(+) = (6R)-5,10-methenyltetrahydrofolate + NADPH. It catalyses the reaction (6R)-5,10-methenyltetrahydrofolate + H2O = (6R)-10-formyltetrahydrofolate + H(+). It participates in one-carbon metabolism; tetrahydrofolate interconversion. Its function is as follows. Catalyzes the oxidation of 5,10-methylenetetrahydrofolate to 5,10-methenyltetrahydrofolate and then the hydrolysis of 5,10-methenyltetrahydrofolate to 10-formyltetrahydrofolate. The protein is Bifunctional protein FolD of Moorella thermoacetica (strain ATCC 39073 / JCM 9320).